The chain runs to 222 residues: CCA-adding enzyme (222 aa).

Residues S50 and K53 each coordinate ATP. CTP-binding residues include S50 and K53. Mg(2+)-binding residues include D61, D63, and D112. The ATP site is built by H135, K155, and Y164. Residues H135, K155, and Y164 each coordinate CTP.

It belongs to the tRNA nucleotidyltransferase/poly(A) polymerase family. Archaeal CCA-adding enzyme subfamily. Homodimer. It depends on Mg(2+) as a cofactor.

The enzyme catalyses a tRNA precursor + 2 CTP + ATP = a tRNA with a 3' CCA end + 3 diphosphate. It catalyses the reaction a tRNA with a 3' CCA end + 2 CTP + ATP = a tRNA with a 3' CCACCA end + 3 diphosphate. Catalyzes the addition and repair of the essential 3'-terminal CCA sequence in tRNAs without using a nucleic acid template. Adds these three nucleotides in the order of C, C, and A to the tRNA nucleotide-73, using CTP and ATP as substrates and producing inorganic pyrophosphate. tRNA 3'-terminal CCA addition is required both for tRNA processing and repair. Also involved in tRNA surveillance by mediating tandem CCA addition to generate a CCACCA at the 3' terminus of unstable tRNAs. While stable tRNAs receive only 3'-terminal CCA, unstable tRNAs are marked with CCACCA and rapidly degraded. The sequence is that of CCA-adding enzyme from Thermoplasma acidophilum.